Here is a 74-residue protein sequence, read N- to C-terminus: Protein kish-B (74 aa).

Positions 1–22 (MTNVYSLDGILVFGLLFVCTCA) are cleaved as a signal peptide. Residues 23–52 (YFKKVPRLKTWLLSEKKGVWGVFYKAAVIG) are Extracellular-facing. Residues 53-73 (TRLHAAVAIACIVMAFYVLFI) form a helical membrane-spanning segment. Position 74 (Lys74) is a topological domain, cytoplasmic.

This sequence belongs to the KISH family.

It is found in the golgi apparatus membrane. Involved in the early part of the secretory pathway. The polypeptide is Protein kish-B (TMEM167B) (Bos taurus (Bovine)).